We begin with the raw amino-acid sequence, 92 residues long: UPF0125 protein NMA1005 (92 aa).

The protein belongs to the UPF0125 (RnfH) family.

This chain is UPF0125 protein NMA1005, found in Neisseria meningitidis serogroup A / serotype 4A (strain DSM 15465 / Z2491).